Reading from the N-terminus, the 255-residue chain is Triosephosphate isomerase (255 aa).

A substrate-binding site is contributed by 9 to 11; the sequence is NWK. H95 serves as the catalytic Electrophile. E167 acts as the Proton acceptor in catalysis. Substrate contacts are provided by residues G173, S212, and 233–234; that span reads GG.

This sequence belongs to the triosephosphate isomerase family. In terms of assembly, homodimer.

It localises to the cytoplasm. The enzyme catalyses D-glyceraldehyde 3-phosphate = dihydroxyacetone phosphate. It functions in the pathway carbohydrate biosynthesis; gluconeogenesis. Its pathway is carbohydrate degradation; glycolysis; D-glyceraldehyde 3-phosphate from glycerone phosphate: step 1/1. In terms of biological role, involved in the gluconeogenesis. Catalyzes stereospecifically the conversion of dihydroxyacetone phosphate (DHAP) to D-glyceraldehyde-3-phosphate (G3P). The polypeptide is Triosephosphate isomerase (Enterobacter cloacae).